The primary structure comprises 197 residues: Recombination protein RecR (197 aa).

The C4-type zinc finger occupies 56–71 (CQQCRTLTEQALCNIC). Residues 79–174 (KELCIVETPA…KVSRIAHGIP (96 aa)) enclose the Toprim domain.

The protein belongs to the RecR family.

Its function is as follows. May play a role in DNA repair. It seems to be involved in an RecBC-independent recombinational process of DNA repair. It may act with RecF and RecO. This Saccharophagus degradans (strain 2-40 / ATCC 43961 / DSM 17024) protein is Recombination protein RecR.